We begin with the raw amino-acid sequence, 194 residues long: Adenylate kinase isoenzyme 1 (194 aa).

The residue at position 1 (Met-1) is an N-acetylmethionine. Residue 18-23 (GSGKGT) participates in ATP binding. Ser-38 bears the Phosphoserine mark. The tract at residues 38–67 (STGDLLRAEVSSGSSRGKMLSSIMEKGELV) is NMP. AMP is bound by residues Thr-39, Arg-44, 65–67 (ELV), 94–97 (GYPR), and Gln-101. The tract at residues 131–141 (KRGETSGRVDD) is LID. Arg-132 is a binding site for ATP. Positions 138 and 149 each coordinate AMP. Gly-177 provides a ligand contact to ATP.

It belongs to the adenylate kinase family. AK1 subfamily. Monomer. Mg(2+) serves as cofactor.

It is found in the cytoplasm. The enzyme catalyses a ribonucleoside 5'-phosphate + ATP = a ribonucleoside 5'-diphosphate + ADP. It catalyses the reaction AMP + ATP = 2 ADP. The catalysed reaction is dAMP + ATP = dADP + ADP. It carries out the reaction dATP + AMP = dADP + ADP. The enzyme catalyses dAMP + dATP = 2 dADP. It catalyses the reaction a 2'-deoxyribonucleoside 5'-diphosphate + ATP = a 2'-deoxyribonucleoside 5'-triphosphate + ADP. The catalysed reaction is a ribonucleoside 5'-diphosphate + ATP = a ribonucleoside 5'-triphosphate + ADP. It carries out the reaction CDP + GTP = CTP + GDP. The enzyme catalyses GDP + ATP = GTP + ADP. It catalyses the reaction UDP + ATP = UTP + ADP. The catalysed reaction is GTP + UDP = UTP + GDP. It carries out the reaction dTDP + GTP = dTTP + GDP. The enzyme catalyses dCDP + GTP = dCTP + GDP. It catalyses the reaction dGDP + ATP = dGTP + ADP. The catalysed reaction is dADP + GTP = dATP + GDP. It carries out the reaction thiamine diphosphate + ADP = thiamine triphosphate + AMP. Functionally, catalyzes the reversible transfer of the terminal phosphate group between ATP and AMP. Also displays broad nucleoside diphosphate kinase activity. Plays an important role in cellular energy homeostasis and in adenine nucleotide metabolism. Also catalyzes at a very low rate the synthesis of thiamine triphosphate (ThTP) from thiamine diphosphate (ThDP) and ADP. This is Adenylate kinase isoenzyme 1 (Ak1) from Rattus norvegicus (Rat).